The following is a 269-amino-acid chain: Putative pyruvate, phosphate dikinase regulatory protein (269 aa).

Residue 147 to 154 participates in ADP binding; the sequence is GLSRTSKT.

This sequence belongs to the pyruvate, phosphate/water dikinase regulatory protein family. PDRP subfamily.

The catalysed reaction is N(tele)-phospho-L-histidyl/L-threonyl-[pyruvate, phosphate dikinase] + ADP = N(tele)-phospho-L-histidyl/O-phospho-L-threonyl-[pyruvate, phosphate dikinase] + AMP + H(+). The enzyme catalyses N(tele)-phospho-L-histidyl/O-phospho-L-threonyl-[pyruvate, phosphate dikinase] + phosphate + H(+) = N(tele)-phospho-L-histidyl/L-threonyl-[pyruvate, phosphate dikinase] + diphosphate. Bifunctional serine/threonine kinase and phosphorylase involved in the regulation of the pyruvate, phosphate dikinase (PPDK) by catalyzing its phosphorylation/dephosphorylation. This is Putative pyruvate, phosphate dikinase regulatory protein from Clostridium botulinum (strain 657 / Type Ba4).